The primary structure comprises 29 residues: Cytochrome b6-f complex subunit 8 (29 aa).

A helical transmembrane segment spans residues 3–23; it reads IVSFAWAALMVVFTFSLSLVV.

This sequence belongs to the PetN family. The 4 large subunits of the cytochrome b6-f complex are cytochrome b6, subunit IV (17 kDa polypeptide, PetD), cytochrome f and the Rieske protein, while the 4 small subunits are PetG, PetL, PetM and PetN. The complex functions as a dimer.

Its subcellular location is the plastid. It localises to the chloroplast thylakoid membrane. Its function is as follows. Component of the cytochrome b6-f complex, which mediates electron transfer between photosystem II (PSII) and photosystem I (PSI), cyclic electron flow around PSI, and state transitions. This is Cytochrome b6-f complex subunit 8 from Phalaenopsis aphrodite subsp. formosana (Moth orchid).